The following is a 138-amino-acid chain: Vesicle transport protein GOT1B (138 aa).

The residue at position 1 (M1) is an N-acetylmethionine. Residues 1-9 (MISLTDTQK) lie on the Cytoplasmic side of the membrane. Residues 10–30 (IGMGLTGFGVFFLFFGMILFF) traverse the membrane as a helical segment. Over 31 to 32 (DK) the chain is Lumenal. A helical membrane pass occupies residues 33–53 (ALLAIGNVLFVAGLAFVIGLE). Residues 54–68 (RTFRFFFQKHKMKAT) are Cytoplasmic-facing. Residues 69–89 (GFFLGGVFVVLIGWPLIGMIF) form a helical membrane-spanning segment. E90 is a topological domain (lumenal). The chain crosses the membrane as a helical span at residues 91-109 (IYGFFLLFRGFFPVVVGFI). Residues 110-138 (RRVPVLGSLLNLPGIRSFVDKVGESNNMV) are Cytoplasmic-facing.

The protein belongs to the GOT1 family.

It localises to the golgi apparatus membrane. May be involved in fusion of ER-derived transport vesicles with the Golgi complex. This chain is Vesicle transport protein GOT1B, found in Bos taurus (Bovine).